The chain runs to 192 residues: Probable GTP-binding protein EngB (192 aa).

In terms of domain architecture, EngB-type G spans 22–192 (SLPEIVFVGR…LLEQLENYTG (171 aa)). Residues 30 to 37 (GRSNVGKS), 57 to 61 (GKTQL), 75 to 78 (DLPG), 142 to 145 (TKYD), and 172 to 174 (YSA) each bind GTP. Mg(2+)-binding residues include Ser37 and Thr59.

Belongs to the TRAFAC class TrmE-Era-EngA-EngB-Septin-like GTPase superfamily. EngB GTPase family. The cofactor is Mg(2+).

Its function is as follows. Necessary for normal cell division and for the maintenance of normal septation. This is Probable GTP-binding protein EngB from Prosthecochloris aestuarii (strain DSM 271 / SK 413).